The following is a 321-amino-acid chain: Phospho-N-acetylmuramoyl-pentapeptide-transferase (321 aa).

Transmembrane regions (helical) follow at residues 1–21, 50–70, 76–96, 112–132, 140–160, 176–196, 200–220, 225–245, 250–270, and 300–320; these read MLFI…PILI, MGGL…IFFV, IILL…DDYI, FLAQ…FHLV, IPFT…IVFW, GLAT…SFVL, AIGA…PYNL, VFMG…ISIM, LSLL…MLQV, and VVTV…WIGV.

This sequence belongs to the glycosyltransferase 4 family. MraY subfamily. Mg(2+) serves as cofactor.

The protein localises to the cell membrane. It carries out the reaction UDP-N-acetyl-alpha-D-muramoyl-L-alanyl-gamma-D-glutamyl-L-lysyl-D-alanyl-D-alanine + di-trans,octa-cis-undecaprenyl phosphate = Mur2Ac(oyl-L-Ala-gamma-D-Glu-L-Lys-D-Ala-D-Ala)-di-trans,octa-cis-undecaprenyl diphosphate + UMP. The protein operates within cell wall biogenesis; peptidoglycan biosynthesis. In terms of biological role, catalyzes the initial step of the lipid cycle reactions in the biosynthesis of the cell wall peptidoglycan: transfers peptidoglycan precursor phospho-MurNAc-pentapeptide from UDP-MurNAc-pentapeptide onto the lipid carrier undecaprenyl phosphate, yielding undecaprenyl-pyrophosphoryl-MurNAc-pentapeptide, known as lipid I. The polypeptide is Phospho-N-acetylmuramoyl-pentapeptide-transferase (Staphylococcus haemolyticus (strain JCSC1435)).